The sequence spans 86 residues: uncharacterized protein (86 aa).

A signal peptide spans 1-25 (MNLRKILLSSALSLGMLVSAAPVLA).

This is an uncharacterized protein from Bacillus subtilis (strain 168).